Consider the following 663-residue polypeptide: DNA ligase (663 aa).

NAD(+) contacts are provided by residues 33 to 37, 82 to 83, and glutamate 112; these read DYSYD and SI. Lysine 114 (N6-AMP-lysine intermediate) is an active-site residue. Arginine 135, glutamate 171, lysine 285, and lysine 309 together coordinate NAD(+). Residues cysteine 403, cysteine 406, cysteine 419, and cysteine 424 each contribute to the Zn(2+) site. Residues 581–663 enclose the BRCT domain; that stretch reads DKEAPLQGKV…SRILDAKSVS (83 aa).

It belongs to the NAD-dependent DNA ligase family. LigA subfamily. Mg(2+) is required as a cofactor. Mn(2+) serves as cofactor.

The enzyme catalyses NAD(+) + (deoxyribonucleotide)n-3'-hydroxyl + 5'-phospho-(deoxyribonucleotide)m = (deoxyribonucleotide)n+m + AMP + beta-nicotinamide D-nucleotide.. Its function is as follows. DNA ligase that catalyzes the formation of phosphodiester linkages between 5'-phosphoryl and 3'-hydroxyl groups in double-stranded DNA using NAD as a coenzyme and as the energy source for the reaction. It is essential for DNA replication and repair of damaged DNA. This chain is DNA ligase, found in Chlamydia trachomatis serovar L2 (strain ATCC VR-902B / DSM 19102 / 434/Bu).